A 236-amino-acid polypeptide reads, in one-letter code: MTRRYWNINLEEMMEAGVHFGHGTRKWNPRMAPYISAKRKGIHIINLTRTARFLSEACDLVFDAASRGKHFLIVGTKNKAADLIASAARKARCHYVNKKWLGGMSTNWSTTETRLQKFRDLRAEQKTGRFNHLPKRDAAMFKRQLSHLQTYLGGIKYMTGLPDIVIIVDQQEEYTALRECVTLGIPTICLIDTNSDPDLADISIPANDDAIASIRLILNKLVFAICEGRSSYIRNR.

The protein belongs to the universal ribosomal protein uS2 family.

It is found in the plastid. The protein resides in the chloroplast. This chain is Small ribosomal subunit protein uS2c (rps2), found in Ceratophyllum demersum (Rigid hornwort).